Reading from the N-terminus, the 338-residue chain is Biotin synthase (338 aa).

The 225-residue stretch at 46–270 folds into the Radical SAM core domain; that stretch reads NEVQLSTLLS…VAVARITMPA (225 aa). Positions 61, 65, and 68 each coordinate [4Fe-4S] cluster. Residues Cys105, Cys136, Cys196, and Arg274 each coordinate [2Fe-2S] cluster.

It belongs to the radical SAM superfamily. Biotin synthase family. In terms of assembly, homodimer. Requires [4Fe-4S] cluster as cofactor. [2Fe-2S] cluster is required as a cofactor.

The enzyme catalyses (4R,5S)-dethiobiotin + (sulfur carrier)-SH + 2 reduced [2Fe-2S]-[ferredoxin] + 2 S-adenosyl-L-methionine = (sulfur carrier)-H + biotin + 2 5'-deoxyadenosine + 2 L-methionine + 2 oxidized [2Fe-2S]-[ferredoxin]. It functions in the pathway cofactor biosynthesis; biotin biosynthesis; biotin from 7,8-diaminononanoate: step 2/2. Catalyzes the conversion of dethiobiotin (DTB) to biotin by the insertion of a sulfur atom into dethiobiotin via a radical-based mechanism. This chain is Biotin synthase, found in Rhizorhabdus wittichii (strain DSM 6014 / CCUG 31198 / JCM 15750 / NBRC 105917 / EY 4224 / RW1) (Sphingomonas wittichii).